A 348-amino-acid polypeptide reads, in one-letter code: Uroporphyrinogen decarboxylase (348 aa).

Residues Arg27–Arg31, Phe46, Asp76, Tyr152, Ser207, and His320 contribute to the substrate site.

Belongs to the uroporphyrinogen decarboxylase family. Homodimer.

Its subcellular location is the cytoplasm. The catalysed reaction is uroporphyrinogen III + 4 H(+) = coproporphyrinogen III + 4 CO2. It participates in porphyrin-containing compound metabolism; protoporphyrin-IX biosynthesis; coproporphyrinogen-III from 5-aminolevulinate: step 4/4. Its function is as follows. Catalyzes the decarboxylation of four acetate groups of uroporphyrinogen-III to yield coproporphyrinogen-III. This chain is Uroporphyrinogen decarboxylase, found in Bacillus anthracis.